The chain runs to 289 residues: Ribosomal protein L11 methyltransferase (289 aa).

Residues T142, G163, D185, and N226 each coordinate S-adenosyl-L-methionine.

The protein belongs to the methyltransferase superfamily. PrmA family.

It localises to the cytoplasm. It carries out the reaction L-lysyl-[protein] + 3 S-adenosyl-L-methionine = N(6),N(6),N(6)-trimethyl-L-lysyl-[protein] + 3 S-adenosyl-L-homocysteine + 3 H(+). Its function is as follows. Methylates ribosomal protein L11. The chain is Ribosomal protein L11 methyltransferase from Legionella pneumophila (strain Corby).